The following is a 449-amino-acid chain: Capsid protein (449 aa).

Positions 1 to 43 (MARRARRPRGRFYAFRRGRWHHLKRLRRRYKFRHRRRQRYRRR) are DNA-binding. The nuclear localization signals stretch occupies residues 6 to 47 (RRPRGRFYAFRRGRWHHLKRLRRRYKFRHRRRQRYRRRAFRK).

This sequence belongs to the gyrovirus capsid protein family. In terms of assembly, homomultimer (Potential). Interacts with Rep; this interaction relocates Rep into the nucleus.

It localises to the host nucleus. It is found in the virion. Its function is as follows. Self-assembles to form the virion icosahedral capsid with a T=1 symmetry. This very small capsid (25 nm in diameter) allows the virus to be very stable in the environment and resistant to some disinfectants, including detergents. Essential for the initial attachment to host receptors. After attachment, the virus is endocytosed and traffics to the nucleus. The capsid protein binds and transports the viral genome and Rep across the nuclear envelope. This chain is Capsid protein (VP1), found in Chicken anemia virus (isolate Australia) (CAV).